The primary structure comprises 620 residues: Ran-binding protein 10 (620 aa).

The tract at residues 1–38 is disordered; sequence MAAATADPGAGNPQAGDSSGGDSGGGLPSPGEQELSRR. A2 is subject to N-acetylalanine. The span at 18–28 shows a compositional bias: gly residues; the sequence is SSGGDSGGGLP. Residues 35 to 222 enclose the B30.2/SPRY domain; sequence LSRRLQRLYP…VDANFGQQPF (188 aa). Residues 253–285 form the LisH domain; that stretch reads WQAVLQNMVSSYLVHHGYCSTATAFARMTETPI. A CTLH domain is found at 291 to 348; sequence SIKNRQKIQKLVLEGRVGEAIETTQRFYPGLLEHNPNLLFMLKCRQFVEMVNGTDSEV. A compositionally biased stretch (polar residues) spans 347 to 398; sequence EVRSLSSRSPKSQDSYPGSPSLSPRHGPSSSHIHNTGADSPSCSNGVASTKN. Positions 347 to 460 are disordered; sequence EVRSLSSRSP…SDSEMEMEAE (114 aa). S361 is modified (phosphoserine). Y362 is subject to Phosphotyrosine. Phosphoserine is present on residues S365, S367, S369, and S422. A compositionally biased stretch (low complexity) spans 409–436; the sequence is SSSSSSSSSSSSSSPSSVNYSESNSTDS. Polar residues predominate over residues 437-450; the sequence is TKSQPHSSTSNQET. Residues S451 and S453 each carry the phosphoserine modification.

It belongs to the RANBP9/10 family. In terms of assembly, may form homodimers. Identified in the CTLH complex that contains GID4, RANBP9 and/or RANBP10, MKLN1, MAEA, RMND5A (or alternatively its paralog RMND5B), GID8, ARMC8, WDR26 and YPEL5. Within this complex, MAEA, RMND5A (or alternatively its paralog RMND5B), GID8, WDR26, and RANBP9 and/or RANBP10 form the catalytic core, while GID4, MKLN1, ARMC8 and YPEL5 have ancillary roles. Interacts with RAN and RANBP9. Interacts with the HGF receptor MET. Interacts with AR. Interacts with TUBB1. Interacts with YPEL5. May interact with TUBB5. Interacts with DDX4. As to expression, expressed at highest levels in spleen and liver. Expressed in megakaryocytes and platelets (at protein level).

Its subcellular location is the cytoplasm. The protein localises to the nucleus. Its function is as follows. May act as an adapter protein to couple membrane receptors to intracellular signaling pathways. Core component of the CTLH E3 ubiquitin-protein ligase complex that selectively accepts ubiquitin from UBE2H and mediates ubiquitination and subsequent proteasomal degradation of the transcription factor HBP1. Enhances dihydrotestosterone-induced transactivation activity of AR, as well as dexamethasone-induced transactivation activity of NR3C1, but does not affect estrogen-induced transactivation. Acts as a guanine nucleotide exchange factor (GEF) for RAN GTPase. May play an essential role in hemostasis and in maintaining microtubule dynamics with respect to both platelet shape and function. This is Ran-binding protein 10 (Ranbp10) from Mus musculus (Mouse).